A 308-amino-acid polypeptide reads, in one-letter code: Olfactory receptor 2T6 (308 aa).

Residues 1 to 28 (MNENNETLTRGFTLMGLFTHNKCSGFFF) are Extracellular-facing. Asn-5 carries N-linked (GlcNAc...) asparagine glycosylation. Residues 29-49 (GVICAVFFMAMIANGVMIFLI) form a helical membrane-spanning segment. At 50-57 (NIDPHLHT) the chain is on the cytoplasmic side. A helical membrane pass occupies residues 58-78 (PMYFLLSHLSVIDTLYISTIV). At 79 to 98 (PKMLVDYLMGEGTISFIACT) the chain is on the extracellular side. A disulfide bridge links Cys-97 with Cys-179. The helical transmembrane segment at 99-119 (AQCFLYMGFMGAEFFLLGLMA) threads the bilayer. Residues 120–145 (YDRYVAICNPLRYPVLISWRVCWMIL) lie on the Cytoplasmic side of the membrane. The chain crosses the membrane as a helical span at residues 146 to 166 (ASSWFGGALDSFLLTPITMSL). Topologically, residues 167-203 (PFCASHQINHFFCEAPTMLRLACGDKTTYETVMYVCC) are extracellular. A helical membrane pass occupies residues 204–224 (VAMLLIPFSVVTASYTRILIT). The Cytoplasmic segment spans residues 225–236 (VHQMTSAEGRKK). A helical membrane pass occupies residues 237 to 257 (AFATCSSHMMVVTLFYGAALY). At 258–271 (TYTLPQSYHTPIKD) the chain is on the extracellular side. A helical membrane pass occupies residues 272–292 (KVFSAFYTILTPLLNPLIYSL). Topologically, residues 293-308 (RNRDVMGALKRVVARC) are cytoplasmic.

This sequence belongs to the G-protein coupled receptor 1 family.

The protein localises to the cell membrane. In terms of biological role, odorant receptor. The chain is Olfactory receptor 2T6 (OR2T6) from Homo sapiens (Human).